The following is a 348-amino-acid chain: 2-methyl-6-phytyl-1,4-hydroquinone methyltransferase 2, chloroplastic (348 aa).

The segment at methionine 1–glycine 48 is disordered. The transit peptide at methionine 1–arginine 59 directs the protein to the chloroplast. Topologically, residues cysteine 60–arginine 317 are chloroplast intermembrane. Residues valine 125 to phenylalanine 134 form an SAM motif I region. Residues valine 170–proline 183 form an SAM motif II region. The tract at residues arginine 211–proline 224 is SAM motif III. The helical transmembrane segment at phenylalanine 318 to lysine 338 threads the bilayer. Residues aspartate 339–isoleucine 348 are Stromal-facing.

This sequence belongs to the class I-like SAM-binding methyltransferase superfamily. MPBQ/MBSQ MT family.

It is found in the plastid. The protein resides in the chloroplast inner membrane. It carries out the reaction 2-methyl-6-phytyl-1,4-benzene-1,4-diol + S-adenosyl-L-methionine = 2,3-dimethyl-6-phytylbenzene-1,4-diol + S-adenosyl-L-homocysteine + H(+). The catalysed reaction is 2-methyl-6-(all-trans-nonaprenyl)benzene-1,4-diol + S-adenosyl-L-methionine = plastoquinol-9 + S-adenosyl-L-homocysteine + H(+). The enzyme catalyses 6-geranylgeranyl-2-methylbenzene-1,4-diol + S-adenosyl-L-methionine = 6-geranylgeranyl-2,3-dimethylbenzene-1,4-diol + S-adenosyl-L-homocysteine + H(+). It participates in cofactor biosynthesis; tocopherol biosynthesis. In terms of biological role, involved in a key methylation step in both tocopherols (vitamin E) and plastoquinone synthesis. Catalyzes the conversion of 2-methyl-6-phytyl-1,4-hydroquinone (MPBQ) to 2,3-dimethyl-6-phytyl-1,4-hydroquinone (DMPQ, a substrate for tocopherol cyclase), and 2-methyl-6-solanyl-1,4-benzoquinone (MSBQ) to plastoquinone. In Oryza sativa subsp. japonica (Rice), this protein is 2-methyl-6-phytyl-1,4-hydroquinone methyltransferase 2, chloroplastic.